We begin with the raw amino-acid sequence, 341 residues long: tRNA N6-adenosine threonylcarbamoyltransferase (341 aa).

Fe cation contacts are provided by histidine 114 and histidine 118. Substrate-binding positions include 136–140, aspartate 169, glycine 182, aspartate 186, and asparagine 278; that span reads LVSGG. Position 304 (aspartate 304) interacts with Fe cation.

It belongs to the KAE1 / TsaD family. Fe(2+) is required as a cofactor.

The protein resides in the cytoplasm. The enzyme catalyses L-threonylcarbamoyladenylate + adenosine(37) in tRNA = N(6)-L-threonylcarbamoyladenosine(37) in tRNA + AMP + H(+). In terms of biological role, required for the formation of a threonylcarbamoyl group on adenosine at position 37 (t(6)A37) in tRNAs that read codons beginning with adenine. Is involved in the transfer of the threonylcarbamoyl moiety of threonylcarbamoyl-AMP (TC-AMP) to the N6 group of A37, together with TsaE and TsaB. TsaD likely plays a direct catalytic role in this reaction. This is tRNA N6-adenosine threonylcarbamoyltransferase from Lactococcus lactis subsp. cremoris (strain MG1363).